A 342-amino-acid polypeptide reads, in one-letter code: Trace amine-associated receptor 8 (342 aa).

Residues 1–31 (MTSNFSQPVVQLCYEDVNGSCIETPYSPGSR) are Extracellular-facing. 2 N-linked (GlcNAc...) asparagine glycosylation sites follow: Asn4 and Asn18. Intrachain disulfides connect Cys21/Cys185 and Cys104/Cys189. A helical membrane pass occupies residues 32–52 (VILYTAFSFGSLLAVFGNLLV). Residues 53 to 67 (MTSVLHFKQLHSPTN) lie on the Cytoplasmic side of the membrane. Residues 68–88 (FLIASLACADFLVGVTVMLFS) traverse the membrane as a helical segment. Residues 89-111 (MVRTVESCWYFGAKFCTLHSCCD) lie on the Extracellular side of the membrane. A helical membrane pass occupies residues 112–132 (VAFCYSSVLHLCFICIDRYIV). Topologically, residues 133–146 (VTDPLVYATKFTVS) are cytoplasmic. The helical transmembrane segment at 147 to 167 (VSGICISVSWILPLTYSGAVF) threads the bilayer. The Extracellular segment spans residues 168–195 (YTGVNDDGLEELVSALNCVGGCQIIVSQ). A helical membrane pass occupies residues 196-216 (GWVLIDFLLFFIPTLVMIILY). Topologically, residues 217–258 (SKIFLIAKQQAIKIETTSSKVESSSESYKIRVAKRERKAAKT) are cytoplasmic. Residues 259–279 (LGVTVLAFVISWLPYTVDILI) traverse the membrane as a helical segment. Asp280 is a topological domain (extracellular). The chain crosses the membrane as a helical span at residues 281–301 (AFMGFLTPAYIYEICCWSAYY). Residues 302 to 342 (NSAMNPLIYALFYPWFRKAIKLILSGDVLKASSSTISLFLE) lie on the Cytoplasmic side of the membrane.

This sequence belongs to the G-protein coupled receptor 1 family. As to expression, expressed in kidney and amygdala. Not expressed in other tissues or brain regions tested.

The protein resides in the cell membrane. Its function is as follows. Olfactory receptor specific for trace amines. Trace amine compounds are enriched in animal body fluids and act on trace amine-associated receptors (TAARs) to elicit both intraspecific and interspecific innate behaviors. Ligand-binding causes a conformation change that triggers signaling via G alpha proteins, possibly G(i)/G(o) G alpha proteins. This Homo sapiens (Human) protein is Trace amine-associated receptor 8 (TAAR8).